We begin with the raw amino-acid sequence, 82 residues long: Small ribosomal subunit protein bS18 (82 aa).

Residues 1–25 (MKRNNMKRARMEQSRRPKKNPLKAE) form a disordered region.

Belongs to the bacterial ribosomal protein bS18 family. Part of the 30S ribosomal subunit. Forms a tight heterodimer with protein bS6.

Functionally, binds as a heterodimer with protein bS6 to the central domain of the 16S rRNA, where it helps stabilize the platform of the 30S subunit. The polypeptide is Small ribosomal subunit protein bS18 (Corynebacterium urealyticum (strain ATCC 43042 / DSM 7109)).